A 709-amino-acid chain; its full sequence is Polyribonucleotide nucleotidyltransferase (709 aa).

Positions 485 and 491 each coordinate Mg(2+). One can recognise a KH domain in the interval 552–611 (PRIYTMKIDPKKIKDVIGKGGATIRSLTEETGTSIDIDDDGTVKIAAVDSNAAKNVMGRI). Residues 621–689 (GAIYKGKVTR…RQGRIRLTMK (69 aa)) form the S1 motif domain.

It belongs to the polyribonucleotide nucleotidyltransferase family. In terms of assembly, component of the RNA degradosome, which is a multiprotein complex involved in RNA processing and mRNA degradation. It depends on Mg(2+) as a cofactor.

It is found in the cytoplasm. The enzyme catalyses RNA(n+1) + phosphate = RNA(n) + a ribonucleoside 5'-diphosphate. Its function is as follows. Involved in mRNA degradation. Catalyzes the phosphorolysis of single-stranded polyribonucleotides processively in the 3'- to 5'-direction. This chain is Polyribonucleotide nucleotidyltransferase, found in Haemophilus influenzae (strain 86-028NP).